A 150-amino-acid polypeptide reads, in one-letter code: Large ribosomal subunit protein bL9 (150 aa).

Belongs to the bacterial ribosomal protein bL9 family.

Binds to the 23S rRNA. This chain is Large ribosomal subunit protein bL9, found in Moorella thermoacetica (strain ATCC 39073 / JCM 9320).